A 448-amino-acid chain; its full sequence is Extracellular serine protease (448 aa).

The first 20 residues, 1–20 (MKLSHLSLAIISAITLAACG), serve as a signal peptide directing secretion. A disordered region spans residues 87–109 (KELENQASDDEVDPTKTGVVGNL).

The protein belongs to the peptidase S17 family. A divalent metal cation is required as a cofactor.

Its function is as follows. This enzyme is a chymotrypsin-like serine protease. Degrades a variety of substrates present in the skin and hoof of the sheep, including elastin, keratin, fibrinogen and collagen. It seems to play an important role in the pathogenesis of sheep footrot. This chain is Extracellular serine protease (prvA), found in Dichelobacter nodosus (Bacteroides nodosus).